A 294-amino-acid chain; its full sequence is UDP-N-acetylenolpyruvoylglucosamine reductase (294 aa).

Positions 26 to 189 constitute an FAD-binding PCMH-type domain; the sequence is VGGQADVLFK…IEAEFKGVSS (164 aa). Arg-169 is an active-site residue. Cys-218 serves as the catalytic Proton donor. The active site involves Glu-288.

Belongs to the MurB family. Requires FAD as cofactor.

It is found in the cytoplasm. It catalyses the reaction UDP-N-acetyl-alpha-D-muramate + NADP(+) = UDP-N-acetyl-3-O-(1-carboxyvinyl)-alpha-D-glucosamine + NADPH + H(+). The protein operates within cell wall biogenesis; peptidoglycan biosynthesis. Its function is as follows. Cell wall formation. This is UDP-N-acetylenolpyruvoylglucosamine reductase from Wolbachia pipientis subsp. Culex pipiens (strain wPip).